The following is a 140-amino-acid chain: ATP synthase epsilon chain (140 aa).

It belongs to the ATPase epsilon chain family. In terms of assembly, F-type ATPases have 2 components, CF(1) - the catalytic core - and CF(0) - the membrane proton channel. CF(1) has five subunits: alpha(3), beta(3), gamma(1), delta(1), epsilon(1). CF(0) has three main subunits: a, b and c.

It is found in the cell membrane. Produces ATP from ADP in the presence of a proton gradient across the membrane. In Baumannia cicadellinicola subsp. Homalodisca coagulata, this protein is ATP synthase epsilon chain.